The sequence spans 245 residues: Biosynthetic peptidoglycan transglycosylase (245 aa).

The helical transmembrane segment at 20–42 threads the bilayer; that stretch reads VYAGSVFAGAWLATQLFYLVQIA.

This sequence belongs to the glycosyltransferase 51 family.

The protein resides in the cell inner membrane. It carries out the reaction [GlcNAc-(1-&gt;4)-Mur2Ac(oyl-L-Ala-gamma-D-Glu-L-Lys-D-Ala-D-Ala)](n)-di-trans,octa-cis-undecaprenyl diphosphate + beta-D-GlcNAc-(1-&gt;4)-Mur2Ac(oyl-L-Ala-gamma-D-Glu-L-Lys-D-Ala-D-Ala)-di-trans,octa-cis-undecaprenyl diphosphate = [GlcNAc-(1-&gt;4)-Mur2Ac(oyl-L-Ala-gamma-D-Glu-L-Lys-D-Ala-D-Ala)](n+1)-di-trans,octa-cis-undecaprenyl diphosphate + di-trans,octa-cis-undecaprenyl diphosphate + H(+). It functions in the pathway cell wall biogenesis; peptidoglycan biosynthesis. Functionally, peptidoglycan polymerase that catalyzes glycan chain elongation from lipid-linked precursors. This Burkholderia ambifaria (strain MC40-6) protein is Biosynthetic peptidoglycan transglycosylase.